The primary structure comprises 89 residues: Large ribosomal subunit protein bL27 (89 aa).

A disordered region spans residues Met1–Lys24.

The protein belongs to the bacterial ribosomal protein bL27 family.

This Synechococcus sp. (strain WH7803) protein is Large ribosomal subunit protein bL27.